We begin with the raw amino-acid sequence, 313 residues long: tRNA dimethylallyltransferase (313 aa).

9 to 16 is a binding site for ATP; it reads GPTATGKS. 11-16 is a binding site for substrate; sequence TATGKS.

This sequence belongs to the IPP transferase family. As to quaternary structure, monomer. Mg(2+) is required as a cofactor.

It catalyses the reaction adenosine(37) in tRNA + dimethylallyl diphosphate = N(6)-dimethylallyladenosine(37) in tRNA + diphosphate. Functionally, catalyzes the transfer of a dimethylallyl group onto the adenine at position 37 in tRNAs that read codons beginning with uridine, leading to the formation of N6-(dimethylallyl)adenosine (i(6)A). This Nocardia farcinica (strain IFM 10152) protein is tRNA dimethylallyltransferase.